A 606-amino-acid chain; its full sequence is Acetylcholinesterase (606 aa).

The N-terminal stretch at 1-28 is a signal peptide; sequence MPSCQPGKMPAPWPWWLQLLLCIPSCVA. Cys-98 and Cys-125 are oxidised to a cystine. Ser-231 (acyl-ester intermediate) is an active-site residue. An intrachain disulfide couples Cys-285 to Cys-296. Asn-289 carries N-linked (GlcNAc...) asparagine glycosylation. Glu-358 (charge relay system) is an active-site residue. Asn-374 is a glycosylation site (N-linked (GlcNAc...) asparagine). Residues Cys-433 and Cys-552 are joined by a disulfide bond. Catalysis depends on His-471, which acts as the Charge relay system. A glycan (N-linked (GlcNAc...) asparagine) is linked at Asn-484.

It belongs to the type-B carboxylesterase/lipase family. In terms of assembly, isoform S is monomeric. Isoform T can form oligomers, including collagen-tailed forms. In terms of processing, the N-terminus is blocked. As to expression, liver and muscle contain both isoform T and isoform S. Venom gland predominantly contains isoform S.

It is found in the synapse. Its subcellular location is the secreted. It localises to the cell membrane. The catalysed reaction is acetylcholine + H2O = choline + acetate + H(+). With respect to regulation, inhibited by active site inhibitors: edrophonium, trimethyl-(m-acetamidopheny1)-ammonium iodide, and trimethyl-(p-acetarnidopheny1)-ammonium iodide. Inhibited by both active and peripheral site inhibitors: decamethonium, and BW284c51. Inhibited by peripheral site inhibitors: snake acetylcholinesterase fasciculin-2, propidium, gallamine, D-tubocurarine, and tacrine. Also inhibited by antibodies Elec410 and Fab410. Functionally, in muscle, it terminates signal transduction at the neuromuscular junction by rapid hydrolysis of the acetylcholine released into the synaptic cleft. In liver, its function is unclear: it could serve as a safeguard against any diffusion of acetylcholine from synapses into the circulation. In venom, its toxic role is unclear: it could result in less musculatory control by rapidly hydrolyzing acetylcholine, or that it works synergistically with alkaline phosphatase (ALP) in paralyzing prey through hypotension. In Bungarus fasciatus (Banded krait), this protein is Acetylcholinesterase (ACHE).